Reading from the N-terminus, the 45-residue chain is Large ribosomal subunit protein bL34c (45 aa).

Over residues 1-10 the composition is skewed to polar residues; it reads MSKGFSNGTN. A disordered region spans residues 1-45; sequence MSKGFSNGTNIKRVRKSGFRARMSNSSGRKILNSRRRKQRKKIAL. Basic residues predominate over residues 32 to 45; it reads LNSRRRKQRKKIAL.

The protein belongs to the bacterial ribosomal protein bL34 family.

Its subcellular location is the plastid. The protein resides in the chloroplast. The polypeptide is Large ribosomal subunit protein bL34c (Gracilaria tenuistipitata var. liui (Red alga)).